The following is a 378-amino-acid chain: B3 domain-containing protein Os03g0622200 (378 aa).

Positions 29-124 (SKHFLKHMVG…SFDVLIFDPS (96 aa)) form a DNA-binding region, TF-B3 1. Residues 140 to 159 (GRAENSAGAEQGGRNGRRTP) are disordered. Residues 256–370 (FVQVIHSSHV…TMTVHVLRRV (115 aa)) constitute a DNA-binding region (TF-B3 2).

Its subcellular location is the nucleus. The sequence is that of B3 domain-containing protein Os03g0622200 from Oryza sativa subsp. japonica (Rice).